The sequence spans 430 residues: MLFSQITSAILLTAASLSLTTARPVSKQSESKDKLLALPLTSVSRKFSQTKFGQQQLAEKLAGLKPFSEAAADGSVDTPGYYDFDLEEYAIPVSIGTPGQDFLLLFDTGSSDTWVPHKGCTKSEGCVGSRFFDPSASSTFKATNYNLNITYGTGGANGLYFEDSIAIGDITVTKQILAYVDNVRGPTAEQSPNADIFLDGLFGAAYPDNTAMEAEYGSTYNTVHVNLYKQGLISSPLFSVYMNTNSGTGEVVFGGVNNTLLGGDIAYTDVMSRYGGYYFWDAPVTGITVDGSAAVRFSRPQAFTIDTGTNFFIMPSSAASKIVKAALPDATETQQGWVVPCASYQNSKSTISIVMQKSGSSSDTIEISVPVSKMLLPVDQSNETCMFIILPDGGNQYIVGNLFLRFFVNVYDFGNNRIGFAPLASAYENE.

A signal peptide spans 1–22 (MLFSQITSAILLTAASLSLTTA). A propeptide spans 23-69 (RPVSKQSESKDKLLALPLTSVSRKFSQTKFGQQQLAEKLAGLKPFSE) (activation peptide). In terms of domain architecture, Peptidase A1 spans 89-421 (YAIPVSIGTP…DFGNNRIGFA (333 aa)). D107 is a catalytic residue. C120 and C126 form a disulfide bridge. Residues N148 and N257 are each glycosylated (N-linked (GlcNAc...) asparagine). Residue D306 is part of the active site. Cysteines 341 and 385 form a disulfide.

The protein belongs to the peptidase A1 family.

It carries out the reaction Hydrolysis of proteins, favoring hydrophobic residues at P1 and P1'. Clots milk. Does not accept Lys at P1, and hence does not activate trypsinogen.. Functionally, this enzyme, capable of clotting milk is frequently used for cheese production. This Rhizomucor miehei protein is Mucorpepsin.